The following is a 78-amino-acid chain: Major outer membrane lipoprotein Lpp 1 (78 aa).

Positions 1–20 (MNRTKLVLGAVILGSTLLAG) are cleaved as a signal peptide. A lipid anchor (N-palmitoyl cysteine) is attached at cysteine 21. Cysteine 21 carries the S-diacylglycerol cysteine lipid modification. Repeats lie at residues 24-34 (NAKIDQLSSDV) and 38-48 (NAKVDQLSNDV). Residues 27 to 75 (IDQLSSDVQTLNAKVDQLSNDVNAMRSDVQAAKDDAARANQRLDNQATK) are a coiled coil. The interval 56–78 (QAAKDDAARANQRLDNQATKYRK) is disordered. Over residues 68–78 (RLDNQATKYRK) the composition is skewed to polar residues. Position 78 is an N6-murein peptidoglycan lysine (lysine 78).

It belongs to the Lpp family. As to quaternary structure, homotrimer.

The protein localises to the cell outer membrane. Its subcellular location is the secreted. It is found in the cell wall. Functionally, a highly abundant outer membrane lipoprotein that controls the distance between the inner and outer membranes. The only protein known to be covalently linked to the peptidoglycan network (PGN). Also non-covalently binds the PGN. The link between the cell outer membrane and PGN contributes to maintenance of the structural and functional integrity of the cell envelope, and maintains the correct distance between the PGN and the outer membrane. This is Major outer membrane lipoprotein Lpp 1 from Salmonella paratyphi A (strain ATCC 9150 / SARB42).